A 487-amino-acid chain; its full sequence is Glutamyl-tRNA(Gln) amidotransferase subunit A (487 aa).

Active-site charge relay system residues include lysine 77 and serine 152. Catalysis depends on serine 176, which acts as the Acyl-ester intermediate.

This sequence belongs to the amidase family. GatA subfamily. In terms of assembly, heterotrimer of A, B and C subunits.

It catalyses the reaction L-glutamyl-tRNA(Gln) + L-glutamine + ATP + H2O = L-glutaminyl-tRNA(Gln) + L-glutamate + ADP + phosphate + H(+). Its function is as follows. Allows the formation of correctly charged Gln-tRNA(Gln) through the transamidation of misacylated Glu-tRNA(Gln) in organisms which lack glutaminyl-tRNA synthetase. The reaction takes place in the presence of glutamine and ATP through an activated gamma-phospho-Glu-tRNA(Gln). In Lysinibacillus sphaericus (strain C3-41), this protein is Glutamyl-tRNA(Gln) amidotransferase subunit A.